The sequence spans 140 residues: Sperm protein associated with the nucleus on the X chromosome N3 (140 aa).

Composition is skewed to polar residues over residues M1–N20, I62–P79, and E131–D140. The segment at M1–D140 is disordered.

It belongs to the SPAN-X family.

This Pan troglodytes (Chimpanzee) protein is Sperm protein associated with the nucleus on the X chromosome N3 (SPANXN3).